Here is a 189-residue protein sequence, read N- to C-terminus: Interferon alpha-13 (189 aa).

A signal peptide spans 1 to 23; it reads MARPCAFLMVLVVLSYWSACSLG. 2 disulfide bridges follow: Cys24–Cys122 and Cys52–Cys162. 2 N-linked (GlcNAc...) asparagine glycosylation sites follow: Asn94 and Asn101.

It belongs to the alpha/beta interferon family.

It localises to the secreted. Its function is as follows. Exhibits antiviral activity against Theiler's virus, Mengo virus and vesicular stomatitis virus. Interferons alpha stimulate the production of two enzymes: a protein kinase and an oligoadenylate synthetase. In Mus musculus (Mouse), this protein is Interferon alpha-13 (Ifna13).